The sequence spans 404 residues: Lupus La protein homolog (404 aa).

Positions 7-99 (NEKMAALEAK…RRSPSKPLPE (93 aa)) constitute an HTH La-type RNA-binding domain. 2 positions are modified to phosphoserine: serine 92 and serine 94. The RRM domain maps to 111–187 (RSVYIKGFPT…TDLLILFKED (77 aa)). Position 116 is an N6-acetyllysine (lysine 116). Threonine 120 is subject to Phosphothreonine. Lysine 128 carries the post-translational modification N6-acetyllysine. Position 225 is a phosphoserine (serine 225). The region spanning 227 to 348 (EEKIGCLLKF…KGKGNKAAQA (122 aa)) is the xRRM domain. N6-acetyllysine is present on residues lysine 328 and lysine 341. The segment covering 329–342 (WKSKGRRFKGKGKG) has biased composition (basic residues). The segment at 329–404 (WKSKGRRFKG…QKTENGAGDQ (76 aa)) is disordered. Over residues 343-354 (NKAAQAGSAKGK) the composition is skewed to low complexity. An N6-acetyllysine modification is found at lysine 360. Position 362 is a phosphothreonine (threonine 362). The residue at position 366 (serine 366) is a Phosphoserine. A compositionally biased stretch (basic and acidic residues) spans 381 to 391 (RAREETDKEPP).

Interacts with DDX15. May interact with RUFY1. In terms of processing, phosphorylated in the C-terminal part of the protein.

Its subcellular location is the nucleus. Functionally, binds to the 3' poly(U) terminus of nascent RNA polymerase III transcripts, protecting them from exonuclease digestion and facilitating their folding and maturation. In Bos taurus (Bovine), this protein is Lupus La protein homolog (SSB).